A 412-amino-acid chain; its full sequence is Putative phosphate permease PF1020 (412 aa).

The next 10 membrane-spanning stretches (helical) occupy residues Met7–Ile27, Ala50–Thr70, Val88–Thr108, Ser119–Trp139, Ile143–Val163, Phe187–Gly207, Gly213–Leu233, Trp298–Val318, Phe335–Ile355, and Asp384–Phe404.

It belongs to the inorganic phosphate transporter (PiT) (TC 2.A.20) family.

It is found in the cell membrane. Functionally, potential transporter for phosphate. In Pyrococcus furiosus (strain ATCC 43587 / DSM 3638 / JCM 8422 / Vc1), this protein is Putative phosphate permease PF1020.